We begin with the raw amino-acid sequence, 126 residues long: Aspartate 1-decarboxylase (126 aa).

Catalysis depends on Ser-25, which acts as the Schiff-base intermediate with substrate; via pyruvic acid. Ser-25 bears the Pyruvic acid (Ser) mark. Thr-57 is a binding site for substrate. Tyr-58 (proton donor) is an active-site residue. 73 to 75 (GGA) provides a ligand contact to substrate.

Belongs to the PanD family. In terms of assembly, heterooctamer of four alpha and four beta subunits. Pyruvate serves as cofactor. Is synthesized initially as an inactive proenzyme, which is activated by self-cleavage at a specific serine bond to produce a beta-subunit with a hydroxyl group at its C-terminus and an alpha-subunit with a pyruvoyl group at its N-terminus.

Its subcellular location is the cytoplasm. It carries out the reaction L-aspartate + H(+) = beta-alanine + CO2. It participates in cofactor biosynthesis; (R)-pantothenate biosynthesis; beta-alanine from L-aspartate: step 1/1. Functionally, catalyzes the pyruvoyl-dependent decarboxylation of aspartate to produce beta-alanine. In Xanthomonas oryzae pv. oryzae (strain MAFF 311018), this protein is Aspartate 1-decarboxylase.